The chain runs to 81 residues: Acyl carrier protein (81 aa).

In terms of domain architecture, Carrier spans 2–80; it reads SKVDNIEQKV…DVVNYIKEHK (79 aa). At Ser40 the chain carries O-(pantetheine 4'-phosphoryl)serine.

This sequence belongs to the acyl carrier protein (ACP) family. In terms of processing, 4'-phosphopantetheine is transferred from CoA to a specific serine of apo-ACP by AcpS. This modification is essential for activity because fatty acids are bound in thioester linkage to the sulfhydryl of the prosthetic group.

It localises to the cytoplasm. The protein operates within lipid metabolism; fatty acid biosynthesis. In terms of biological role, carrier of the growing fatty acid chain in fatty acid biosynthesis. In Rickettsia bellii (strain OSU 85-389), this protein is Acyl carrier protein.